The chain runs to 801 residues: MKPQLLTPLRRRPWTCRQCLQRLQRLQQQTRRSFETAASPAPGHTQVDYIPADASQSKKVDDETIRRVFDSQHFWREFSQRRSTQSKPTGLVQNQYLTSPDGFRTFANVSLQKCQAIVSKVLAASTLEEYRTMARDLDRLSDLLCRVIDLSDFIRVIHPDPRVQEAATQAYALMFEYMNVLNTTTGLNDQLKKAVANPEVASHWTEEEKIVAQILIKDFSNSAILMPPQERQRFVNLSNDISQLGSSFVNSPEPAKSQVVVNANSLRGLDPMLVQQIKRWNRTASVPTTGMIPRLALRSVHDESVRREVYLASRTSSARQLHRLEELLLKRAELAKLSGYSSFGHMTLSDKMAKSPEAVSNFLTSLVDSNRTLVREELLQLRNMKGSPLQPWDHAYYVHKRVMQYSQSRRSRELSAVPEFFSLGTVMQGLSRLFDRLYGVRLVPQEAAPGETWNPDVRRLDVVDEADRHIAVIYCDLFSRPNKHPNPAHFTLRCSREISATEVAECASLDQSSHPNDGMATAVDPTTKTLRQLPTIALVCDFAEPAAHGGRPSLLSEHSVRTLFHEMGHALHSILGQTRLQSISGTRCATDFAELPSVLMEHFATAPSVLSLYARHWETDEPLSERMIQSMERDRTAHGSIYGAVENEAQILMALVDQEYHSRPADGGRIDSTALYHEVAQRHSSLPDPAETAPPTSWQGFFGHLYGYGATYYSYIFDRAIANKLWADVFGAGRAAVDRAAGERYKTEVLRWGGGRNGWQCVAGVLGPSNASNADGRLVEGGDEAMREVGRWGLGRDGVSG.

The N-terminal 41 residues, 1–41 (MKPQLLTPLRRRPWTCRQCLQRLQRLQQQTRRSFETAASPA), are a transit peptide targeting the mitochondrion. Positions 31 to 54 (RRSFETAASPAPGHTQVDYIPADA) are disordered. Position 565 (His565) interacts with Zn(2+). Residue Glu566 is part of the active site. Zn(2+) is bound by residues His569 and His572.

This sequence belongs to the peptidase M3 family. Requires Zn(2+) as cofactor.

The protein localises to the mitochondrion matrix. It carries out the reaction Release of an N-terminal octapeptide as second stage of processing of some proteins imported into the mitochondrion.. Cleaves proteins, imported into the mitochondrion, to their mature size. While most mitochondrial precursor proteins are processed to the mature form in one step by mitochondrial processing peptidase (MPP), the sequential cleavage by MIP of an octapeptide after initial processing by MPP is a required step for a subgroup of nuclear-encoded precursor proteins destined for the matrix or the inner membrane. In Aspergillus clavatus (strain ATCC 1007 / CBS 513.65 / DSM 816 / NCTC 3887 / NRRL 1 / QM 1276 / 107), this protein is Mitochondrial intermediate peptidase (oct1).